The chain runs to 141 residues: ATP synthase epsilon chain (141 aa).

The protein belongs to the ATPase epsilon chain family. As to quaternary structure, F-type ATPases have 2 components, CF(1) - the catalytic core - and CF(0) - the membrane proton channel. CF(1) has five subunits: alpha(3), beta(3), gamma(1), delta(1), epsilon(1). CF(0) has three main subunits: a, b and c.

Its subcellular location is the cell inner membrane. Produces ATP from ADP in the presence of a proton gradient across the membrane. The sequence is that of ATP synthase epsilon chain (atpC) from Acidithiobacillus ferridurans.